Here is a 397-residue protein sequence, read N- to C-terminus: Trans-2-enoyl-CoA reductase [NADH] (397 aa).

Residues 53-58 (GCSNGY), 79-80 (FE), 116-117 (DA), and 144-145 (LA) contribute to the NAD(+) site. Tyr230 contacts substrate. The active-site Proton donor is Tyr240. Residues Lys249 and 276 to 278 (LVT) contribute to the NAD(+) site.

Belongs to the TER reductase family. Monomer.

The catalysed reaction is a 2,3-saturated acyl-CoA + NAD(+) = a (2E)-enoyl-CoA + NADH + H(+). It functions in the pathway lipid metabolism; fatty acid biosynthesis. With respect to regulation, inhibited by lauroyl-CoA. Involved in the fatty acid synthesis (FAS II). Catalyzes the reduction of the carbon-carbon double bond of crotonyl-CoA to yield butyryl-CoA. In vitro it can also use hexenoyl-CoA and dodecenoyl-CoA as substrates. This Treponema denticola (strain ATCC 35405 / DSM 14222 / CIP 103919 / JCM 8153 / KCTC 15104) protein is Trans-2-enoyl-CoA reductase [NADH].